A 391-amino-acid polypeptide reads, in one-letter code: Heme A synthase (391 aa).

A run of 8 helical transmembrane segments spans residues 37–57 (IRLWLMALFLLVMAMIVVGGL), 121–141 (RQLGRVIGLVWAVGFLGFLAA), 152–172 (LLALGALGGLQGGIGWWMVAS), 186–206 (LATHLGLAFIILGLIAWQALL), 229–249 (TTVLIGVAFLQIVLGALVAGI), 298–318 (FLHRMAGYALAALGLIFWIFG), 332–352 (LLAMALLAQILLGVGTVLSAA), and 354–374 (WQVAIAHQVGAVVIWVLILHA). His300 is a heme binding site. His360 is a binding site for heme.

It belongs to the COX15/CtaA family. Type 2 subfamily. As to quaternary structure, interacts with CtaB. The cofactor is heme b.

It is found in the cell membrane. It catalyses the reaction Fe(II)-heme o + 2 A + H2O = Fe(II)-heme a + 2 AH2. Its pathway is porphyrin-containing compound metabolism; heme A biosynthesis; heme A from heme O: step 1/1. Catalyzes the conversion of heme O to heme A by two successive hydroxylations of the methyl group at C8. The first hydroxylation forms heme I, the second hydroxylation results in an unstable dihydroxymethyl group, which spontaneously dehydrates, resulting in the formyl group of heme A. The protein is Heme A synthase of Cereibacter sphaeroides (strain KD131 / KCTC 12085) (Rhodobacter sphaeroides).